A 317-amino-acid polypeptide reads, in one-letter code: Acetylglutamate kinase (317 aa).

Residues 75–76 (GG), Arg-97, and Asn-196 each bind substrate.

This sequence belongs to the acetylglutamate kinase family. ArgB subfamily.

It is found in the cytoplasm. The catalysed reaction is N-acetyl-L-glutamate + ATP = N-acetyl-L-glutamyl 5-phosphate + ADP. It participates in amino-acid biosynthesis; L-arginine biosynthesis; N(2)-acetyl-L-ornithine from L-glutamate: step 2/4. Catalyzes the ATP-dependent phosphorylation of N-acetyl-L-glutamate. This Corynebacterium jeikeium (strain K411) protein is Acetylglutamate kinase.